We begin with the raw amino-acid sequence, 132 residues long: MKKTPLLNVALSRVIAGMGHGDILVIGDAGLPVPPGVEMIDLAVTPGLPDFASVLRAVLSELQVERHVLAEEMQKVVPPALVEIERLKGKLGKREWLSHENFKVLSRSARAVVRTGECQPYSNIALISGVTF.

The Proton donor role is filled by histidine 20. Residues aspartate 28, histidine 99, and 121–123 each bind substrate; that span reads YSN.

It belongs to the RbsD / FucU family. RbsD subfamily. Homodecamer.

The protein resides in the cytoplasm. The enzyme catalyses beta-D-ribopyranose = beta-D-ribofuranose. Its pathway is carbohydrate metabolism; D-ribose degradation; D-ribose 5-phosphate from beta-D-ribopyranose: step 1/2. Its function is as follows. Catalyzes the interconversion of beta-pyran and beta-furan forms of D-ribose. The sequence is that of D-ribose pyranase from Pseudomonas putida (strain GB-1).